An 81-amino-acid polypeptide reads, in one-letter code: Protein Vpu (81 aa).

Residues 1–7 (MQPLQIL) are Extracellular-facing. The chain crosses the membrane as a helical span at residues 8-28 (SIVALVVAAIIAIVVWSIVFI). The Cytoplasmic portion of the chain corresponds to 29–81 (LIRKILRQRKIDRLIDRIRERAEDSGNESEGIRKELSALVEMGHDAPGDIDDL). Residues S53 and S57 each carry the phosphoserine; by host CK2 modification.

It belongs to the HIV-1 VPU protein family. In terms of assembly, homopentamer. Interacts with host CD4 and BRTC; these interactions induce proteasomal degradation of CD4. Interacts with host BST2; this interaction leads to the degradation of host BST2. Interacts with host FBXW11. Interacts with host AP1M1; this interaction plays a role in the mistrafficking and subsequent degradation of host BST2. Interacts with host RANBP2; this interaction allows Vpu to down-regulate host BLM sumoylation. In terms of processing, phosphorylated by host CK2. This phosphorylation is necessary for interaction with human BTRC and degradation of CD4.

The protein resides in the host membrane. Its activity is regulated as follows. Ion channel activity is inhibited by hexamethylene amiloride in vitro. In terms of biological role, enhances virion budding by targeting host CD4 and Tetherin/BST2 to proteasome degradation. Degradation of CD4 prevents any unwanted premature interactions between viral Env and its host receptor CD4 in the endoplasmic reticulum. Degradation of antiretroviral protein Tetherin/BST2 is important for virion budding, as BST2 tethers new viral particles to the host cell membrane. Mechanistically, Vpu bridges either CD4 or BST2 to BTRC, a substrate recognition subunit of the Skp1/Cullin/F-box protein E3 ubiquitin ligase, induces their ubiquitination and subsequent proteasomal degradation. The alteration of the E3 ligase specificity by Vpu seems to promote the degradation of host IKBKB, leading to NF-kappa-B down-regulation and subsequent apoptosis. Acts as a viroporin that forms an oligomeric ion channel in membranes. Modulates the host DNA repair mechanisms to promote degradation of nuclear viral cDNA in cells that are already productively infected in order to suppress immune sensing and proviral hyper-integration (superinfection). Manipulates PML-NBs and modulates SUMOylation of host BLM protein thereby enhancing its DNA-end processing activity toward viral unintegrated linear DNA. Also inhibits RAD52-mediated homologous repair of viral cDNA, preventing the generation of dead-end circular forms of single copies of the long terminal repeat and permitting sustained nucleolytic attack. The chain is Protein Vpu from Homo sapiens (Human).